A 427-amino-acid polypeptide reads, in one-letter code: Probable G-protein coupled receptor 150 (427 aa).

Over 1 to 3 (MED) the chain is Extracellular. Residues 4–24 (PFSLAILNPASNLSVPTQPSW) form a helical membrane-spanning segment. Over 25–50 (SLNLTSEQGASVPGPHSPPRGPPSHR) the chain is Cytoplasmic. The chain crosses the membrane as a helical span at residues 51 to 71 (IHLVFLGIILVAAVAGNTTVL). At 72-89 (CRLCGGSSGPWPGPKRRK) the chain is on the extracellular side. The helical transmembrane segment at 90–110 (MDFLLVQLAAADLYASGGTAL) threads the bilayer. Residues 111–170 (SQLAWELLGDPRPALGDLACRLSHLLQASGRGASAHLVALIALERQLAVRIPQGPQLPAR) are Cytoplasmic-facing. Residues 171 to 191 (ALAALSWLLALLLALPPTFVV) traverse the membrane as a helical segment. Topologically, residues 192-230 (RWDAPPSSTANAWPGKHCCRGIFAPLPRWHLQVYALYEA) are extracellular. A helical transmembrane segment spans residues 231–251 (IVGFAAPVALLGFSCGHLLCV). The Cytoplasmic segment spans residues 252–286 (WWQRGSQAPVARMPWSPSMARASLPSALPQAKVQS). A helical membrane pass occupies residues 287-307 (LKMSLALALLFVGCDLPYFAA). The Extracellular portion of the chain corresponds to 308 to 327 (RLAAAWSSKPAGDWERESLV). Residues 328–348 (AAMRVLEVANSAINPLIYLFF) form a helical membrane-spanning segment. Residues 349-427 (QAGDCRLWRR…PPPCSCESAF (79 aa)) lie on the Cytoplasmic side of the membrane. Residues 402 to 427 (EERNQGCLRPPPPRPRPPPCSCESAF) form a disordered region. The segment covering 410 to 421 (RPPPPRPRPPPC) has biased composition (pro residues).

The protein belongs to the G-protein coupled receptor 1 family.

It is found in the cell membrane. Functionally, orphan receptor. This Mus musculus (Mouse) protein is Probable G-protein coupled receptor 150 (Gpr150).